The chain runs to 242 residues: Protein CDV3 homolog B (242 aa).

Residues Met1–Lys15 show a composition bias toward basic and acidic residues. The segment at Met1–Gln242 is disordered. Ala2 bears the N-acetylalanine mark. Low complexity predominate over residues Ala30–Lys57. Positions Val59–Glu75 are enriched in basic and acidic residues. Positions Lys105 to Glu122 are enriched in acidic residues. Polar residues-rich tracts occupy residues Asp129–Ala143 and Ser183–Ala194. A compositionally biased stretch (basic and acidic residues) spans Lys195–Lys213.

It belongs to the CDV3 family.

It is found in the cytoplasm. In Xenopus laevis (African clawed frog), this protein is Protein CDV3 homolog B (cdv3-b).